We begin with the raw amino-acid sequence, 876 residues long: DNA mismatch repair protein MutS (876 aa).

Position 626–633 (626–633 (GPNMGGKS)) interacts with ATP.

The protein belongs to the DNA mismatch repair MutS family.

This protein is involved in the repair of mismatches in DNA. It is possible that it carries out the mismatch recognition step. This protein has a weak ATPase activity. In Bordetella bronchiseptica (strain ATCC BAA-588 / NCTC 13252 / RB50) (Alcaligenes bronchisepticus), this protein is DNA mismatch repair protein MutS.